A 137-amino-acid chain; its full sequence is Protein ApaG (137 aa).

One can recognise an ApaG domain in the interval 2–126 (PKYQFQVQVQ…FVLEAFSPGQ (125 aa)).

The sequence is that of Protein ApaG from Acidovorax sp. (strain JS42).